A 150-amino-acid polypeptide reads, in one-letter code: Ribosome maturation factor RimP (150 aa).

Belongs to the RimP family.

The protein resides in the cytoplasm. In terms of biological role, required for maturation of 30S ribosomal subunits. The polypeptide is Ribosome maturation factor RimP (Salmonella dublin (strain CT_02021853)).